We begin with the raw amino-acid sequence, 488 residues long: Alpha,alpha-trehalose-phosphate synthase [UDP-forming] 56 kDa subunit (488 aa).

2 residues coordinate D-glucose 6-phosphate: Tyr-102 and Asp-156. Arg-293 and Lys-298 together coordinate UDP. Positions 293 and 298 each coordinate UDP-alpha-D-glucose. Residue Arg-331 coordinates D-glucose 6-phosphate. UDP contacts are provided by residues Ile-370 and 396-400 (LVSYE). Residues Ile-370 and 392 to 400 (DGMNLVSYE) each bind UDP-alpha-D-glucose.

Belongs to the glycosyltransferase 20 family. Trehalose synthase/phosphatase complex contains three or four polypeptides of 56 kDa (TPS1), 102 kDa (TPS2), 115 kDa (TPS3) and 123 kDa (TSL1).

It carries out the reaction D-glucose 6-phosphate + UDP-alpha-D-glucose = alpha,alpha-trehalose 6-phosphate + UDP + H(+). Its pathway is carbohydrate biosynthesis. Its function is as follows. Synthase catalytic subunit of the trehalose synthase complex that catalyzes the production of trehalose from glucose-6-phosphate and UDP-alpha-D-glucose in a two step process. Can function independently of the complex. The polypeptide is Alpha,alpha-trehalose-phosphate synthase [UDP-forming] 56 kDa subunit (Kluyveromyces lactis (strain ATCC 8585 / CBS 2359 / DSM 70799 / NBRC 1267 / NRRL Y-1140 / WM37) (Yeast)).